The sequence spans 787 residues: tRNA ligase 1 (787 aa).

The N6-AMP-lysine intermediate role is filled by Lys-117.

It belongs to the TRL1 family.

It is found in the cytoplasm. It catalyses the reaction ATP + (ribonucleotide)n-3'-hydroxyl + 5'-phospho-(ribonucleotide)m = (ribonucleotide)n+m + AMP + diphosphate.. Required for the splicing of precursor tRNA molecules containing introns. The ligation activity requires three enzymatic activities: phosphorylation of the 5' terminus of the 3' half-tRNA in the presence of ATP, opening of the 2'3'-cyclic phosphodiester bond of the 5' half-tRNA leaving a 2'-phosphomonoester and ligation of the two tRNA halves in an ATP-dependent reaction. This chain is tRNA ligase 1 (trl1), found in Schizosaccharomyces pombe (strain 972 / ATCC 24843) (Fission yeast).